The primary structure comprises 426 residues: Histidine--tRNA ligase (426 aa).

Belongs to the class-II aminoacyl-tRNA synthetase family. Homodimer.

The protein resides in the cytoplasm. It catalyses the reaction tRNA(His) + L-histidine + ATP = L-histidyl-tRNA(His) + AMP + diphosphate + H(+). This chain is Histidine--tRNA ligase, found in Streptococcus pyogenes serotype M6 (strain ATCC BAA-946 / MGAS10394).